A 361-amino-acid polypeptide reads, in one-letter code: NAD(P)H-quinone oxidoreductase subunit 1, chloroplastic (361 aa).

Transmembrane regions (helical) follow at residues 25-45, 102-122, 125-145, 246-266, 298-318, and 334-354; these read IWLL…VLVI, VAVV…HLVL, LSIG…GLLM, YSGI…LVSS, VFGT…FLFI, and LLNL…LLTT.

The protein belongs to the complex I subunit 1 family. As to quaternary structure, NDH is composed of at least 16 different subunits, 5 of which are encoded in the nucleus.

It is found in the plastid. The protein localises to the chloroplast thylakoid membrane. It carries out the reaction a plastoquinone + NADH + (n+1) H(+)(in) = a plastoquinol + NAD(+) + n H(+)(out). It catalyses the reaction a plastoquinone + NADPH + (n+1) H(+)(in) = a plastoquinol + NADP(+) + n H(+)(out). Its function is as follows. NDH shuttles electrons from NAD(P)H:plastoquinone, via FMN and iron-sulfur (Fe-S) centers, to quinones in the photosynthetic chain and possibly in a chloroplast respiratory chain. The immediate electron acceptor for the enzyme in this species is believed to be plastoquinone. Couples the redox reaction to proton translocation, and thus conserves the redox energy in a proton gradient. This chain is NAD(P)H-quinone oxidoreductase subunit 1, chloroplastic, found in Nymphaea alba (White water-lily).